Here is a 577-residue protein sequence, read N- to C-terminus: Zona pellucida sperm-binding protein 3 receptor (577 aa).

An N-terminal signal peptide occupies residues Met-1–Gly-32. 6 consecutive Sushi domains span residues Asp-33 to Arg-92, Lys-93 to Ile-154, Ala-155 to Lys-219, Ile-220 to Pro-279, Asn-280 to Arg-346, and Val-347 to Ala-412. Disulfide bonds link Cys-34/Cys-78, Cys-64/Cys-90, Cys-95/Cys-136, Cys-122/Cys-152, Cys-157/Cys-200, Cys-186/Cys-217, Cys-222/Cys-264, Cys-250/Cys-277, Cys-282/Cys-332, Cys-316/Cys-344, Cys-349/Cys-397, and Cys-382/Cys-410. 2 N-linked (GlcNAc...) asparagine glycosylation sites follow: Asn-72 and Asn-81. N-linked (GlcNAc...) asparagine glycans are attached at residues Asn-144, Asn-195, and Asn-204. N-linked (GlcNAc...) asparagine glycosylation occurs at Asn-335. 7 N-linked (GlcNAc...) asparagine glycosylation sites follow: Asn-426, Asn-431, Asn-434, Asn-443, Asn-462, Asn-475, and Asn-497. A Sushi 7 domain is found at Ala-451–Met-509. Cystine bridges form between Cys-453–Cys-494 and Cys-480–Cys-507.

In terms of assembly, homomultimer; disulfide-linked. Glycosylated. In terms of tissue distribution, testis specific.

The protein resides in the cytoplasmic vesicle. It is found in the secretory vesicle. The protein localises to the acrosome lumen. Its function is as follows. Binds to ZP3 glycoprotein in egg zona pellucida. Probably involved in interactions between sperm acrosome and egg zona pellucida during and immediately following the acrosome reaction. In Rattus norvegicus (Rat), this protein is Zona pellucida sperm-binding protein 3 receptor (Zp3r).